The chain runs to 751 residues: Polyadenylate-binding protein, cytoplasmic and nuclear (751 aa).

2 stretches are compositionally biased toward polar residues: residues 1-26 and 36-50; these read MSAE…NPAA and ESAS…NQPH. The segment at 1–50 is disordered; that stretch reads MSAEVSTTPAADNTVNGTPEATNPAATSAPEVTAVESASPSATPSANQPH. RRM domains lie at 52–130, 140–217, 233–310, and 336–458; these read ASLY…WSQR, GNVF…HHIS, TNVY…RAQK, and VNLY…LAQR. Disordered regions lie at residues 371 to 413 and 601 to 643; these read TVTA…KKTE and GQGM…REEV. Residues 379 to 413 show a composition bias toward basic and acidic residues; sequence ESEKEKESNKENEKEGEEKTEEKPKESEEEAKKTE. Gly residues predominate over residues 603-629; it reads GMRGPGYGQGRGGAPVQGGPRPQGGRG. One can recognise a PABC domain in the interval 646–723; that stretch reads TGGLTAQTLN…ALSVYDEYMK (78 aa). The tract at residues 725–751 is disordered; that stretch reads KGEGEAPAEPAKPKEDAAETATEENKS. The span at 735 to 751 shows a compositional bias: basic and acidic residues; it reads AKPKEDAAETATEENKS.

It belongs to the polyadenylate-binding protein type-1 family.

The protein localises to the cytoplasm. It is found in the nucleus. Functionally, binds the poly(A) tail of mRNA. Appears to be an important mediator of the multiple roles of the poly(A) tail in mRNA biogenesis, stability and translation. In the nucleus, involved in both mRNA cleavage and polyadenylation. Is also required for efficient mRNA export to the cytoplasm. Acts in concert with a poly(A)-specific nuclease (PAN) to affect poly(A) tail shortening, which may occur concomitantly with either nucleocytoplasmic mRNA transport or translational initiation. In the cytoplasm, stimulates translation initiation and regulates mRNA decay through translation termination-coupled poly(A) shortening, probably mediated by PAN. The protein is Polyadenylate-binding protein, cytoplasmic and nuclear (pab1) of Neosartorya fischeri (strain ATCC 1020 / DSM 3700 / CBS 544.65 / FGSC A1164 / JCM 1740 / NRRL 181 / WB 181) (Aspergillus fischerianus).